The following is a 98-amino-acid chain: NADH-ubiquinone oxidoreductase chain 4L (98 aa).

The next 3 membrane-spanning stretches (helical) occupy residues M1–V21, S29–L49, and I61–V81.

The protein belongs to the complex I subunit 4L family. As to quaternary structure, core subunit of respiratory chain NADH dehydrogenase (Complex I) which is composed of 45 different subunits.

It is found in the mitochondrion inner membrane. The enzyme catalyses a ubiquinone + NADH + 5 H(+)(in) = a ubiquinol + NAD(+) + 4 H(+)(out). Its function is as follows. Core subunit of the mitochondrial membrane respiratory chain NADH dehydrogenase (Complex I) which catalyzes electron transfer from NADH through the respiratory chain, using ubiquinone as an electron acceptor. Part of the enzyme membrane arm which is embedded in the lipid bilayer and involved in proton translocation. This Orycteropus afer (Aardvark) protein is NADH-ubiquinone oxidoreductase chain 4L (MT-ND4L).